Here is a 199-residue protein sequence, read N- to C-terminus: Ribonuclease P protein subunit p25 (199 aa).

Basic and acidic residues predominate over residues 1-11 (MENFRKVRSEE). Disordered stretches follow at residues 1–31 (MENF…FADL) and 146–199 (PRQL…DRTA). S172 is subject to Phosphoserine. Residues 190–199 (PEAENEDRTA) are compositionally biased toward acidic residues.

Belongs to the histone-like Alba family. In terms of assembly, component of nuclear RNase P and RNase MRP ribonucleoproteins. RNase P consists of a catalytic RNA moiety and 10 different protein chains; POP1, POP4, POP5, POP7, RPP14, RPP21, RPP25, RPP30, RPP38 and RPP40. Within the RNase P complex, POP1, POP7 and RPP25 form the 'finger' subcomplex, POP5, RPP14, RPP40 and homodimeric RPP30 form the 'palm' subcomplex, and RPP21, POP4 and RPP38 form the 'wrist' subcomplex. All subunits of the RNase P complex interact with the catalytic RNA. Several subunits of RNase P are also part of the RNase MRP complex. RNase MRP consists of a catalytic RNA moiety and about 8 protein subunits; POP1, POP7, RPP25, RPP30, RPP38, RPP40 and possibly also POP4 and POP5. POP7 forms a heterodimer with RPP25 that binds to the P3 stem loop of the catalytic RNA.

It is found in the nucleus. The protein resides in the nucleolus. Its function is as follows. Component of ribonuclease P, a ribonucleoprotein complex that generates mature tRNA molecules by cleaving their 5'-ends. Also a component of the MRP ribonuclease complex, which cleaves pre-rRNA sequences. The polypeptide is Ribonuclease P protein subunit p25 (Rpp25) (Rattus norvegicus (Rat)).